A 304-amino-acid chain; its full sequence is Calmodulin-lysine N-methyltransferase (304 aa).

This sequence belongs to the class I-like SAM-binding methyltransferase superfamily. CLNMT methyltransferase family. As to quaternary structure, monomer. Expressed in discreet spatial and tissue-specific patterns including root tips, leaves-tips, floral buds, stamens, hydathodes, stigma, anther, siliques, apical meristems and germinating seeds. Also observed at high levels in the root stele region.

It localises to the cytoplasm. Its subcellular location is the nucleus. The enzyme catalyses [calmodulin]-L-lysine + S-adenosyl-L-methionine = [calmodulin]-N(6)-methyl-L-lysine + S-adenosyl-L-homocysteine + H(+). Functionally, catalyzes the trimethylation of calmodulin. Regulates roots development probably by modulating auxin signaling responses. May be involved in gravitropism. Involved in abscisic acid (ABA)-mediated and abiotic stress responses, including salt (NaCl), cold, drought and heat stresses. The chain is Calmodulin-lysine N-methyltransferase from Arabidopsis thaliana (Mouse-ear cress).